Here is a 264-residue protein sequence, read N- to C-terminus: 3-methyl-2-oxobutanoate hydroxymethyltransferase (264 aa).

The Mg(2+) site is built by D45 and D84. 3-methyl-2-oxobutanoate is bound by residues 45–46 (DS), D84, and K112. A Mg(2+)-binding site is contributed by E114. Catalysis depends on E181, which acts as the Proton acceptor.

It belongs to the PanB family. In terms of assembly, homodecamer; pentamer of dimers. Requires Mg(2+) as cofactor.

The protein resides in the cytoplasm. The catalysed reaction is 3-methyl-2-oxobutanoate + (6R)-5,10-methylene-5,6,7,8-tetrahydrofolate + H2O = 2-dehydropantoate + (6S)-5,6,7,8-tetrahydrofolate. It functions in the pathway cofactor biosynthesis; (R)-pantothenate biosynthesis; (R)-pantoate from 3-methyl-2-oxobutanoate: step 1/2. Functionally, catalyzes the reversible reaction in which hydroxymethyl group from 5,10-methylenetetrahydrofolate is transferred onto alpha-ketoisovalerate to form ketopantoate. The chain is 3-methyl-2-oxobutanoate hydroxymethyltransferase from Alteromonas mediterranea (strain DSM 17117 / CIP 110805 / LMG 28347 / Deep ecotype).